The primary structure comprises 492 residues: UDP-N-acetylmuramate--L-alanine ligase (492 aa).

Residue 126–132 (GTHGKTT) coordinates ATP.

Belongs to the MurCDEF family.

Its subcellular location is the cytoplasm. It catalyses the reaction UDP-N-acetyl-alpha-D-muramate + L-alanine + ATP = UDP-N-acetyl-alpha-D-muramoyl-L-alanine + ADP + phosphate + H(+). It participates in cell wall biogenesis; peptidoglycan biosynthesis. Its function is as follows. Cell wall formation. The chain is UDP-N-acetylmuramate--L-alanine ligase from Serratia proteamaculans (strain 568).